The chain runs to 291 residues: Energy-coupling factor transporter ATP-binding protein EcfA2 (291 aa).

The ABC transporter domain occupies I3 to G246. G40–S47 contributes to the ATP binding site.

The protein belongs to the ABC transporter superfamily. Energy-coupling factor EcfA family. Forms a stable energy-coupling factor (ECF) transporter complex composed of 2 membrane-embedded substrate-binding proteins (S component), 2 ATP-binding proteins (A component) and 2 transmembrane proteins (T component).

It localises to the cell membrane. Functionally, ATP-binding (A) component of a common energy-coupling factor (ECF) ABC-transporter complex. Unlike classic ABC transporters this ECF transporter provides the energy necessary to transport a number of different substrates. The chain is Energy-coupling factor transporter ATP-binding protein EcfA2 from Latilactobacillus sakei subsp. sakei (strain 23K) (Lactobacillus sakei subsp. sakei).